The following is a 336-amino-acid chain: 4-hydroxy-3-methylbut-2-enyl diphosphate reductase (336 aa).

C32 is a binding site for [4Fe-4S] cluster. (2E)-4-hydroxy-3-methylbut-2-enyl diphosphate contacts are provided by H61 and H94. Residues H61 and H94 each coordinate dimethylallyl diphosphate. 2 residues coordinate isopentenyl diphosphate: H61 and H94. C116 serves as a coordination point for [4Fe-4S] cluster. H148 lines the (2E)-4-hydroxy-3-methylbut-2-enyl diphosphate pocket. A dimethylallyl diphosphate-binding site is contributed by H148. H148 contributes to the isopentenyl diphosphate binding site. The active-site Proton donor is E150. Residue T189 coordinates (2E)-4-hydroxy-3-methylbut-2-enyl diphosphate. C219 contributes to the [4Fe-4S] cluster binding site. S247, S248, N249, and S292 together coordinate (2E)-4-hydroxy-3-methylbut-2-enyl diphosphate. Dimethylallyl diphosphate contacts are provided by S247, S248, N249, and S292. Residues S247, S248, N249, and S292 each contribute to the isopentenyl diphosphate site.

This sequence belongs to the IspH family. [4Fe-4S] cluster is required as a cofactor.

It catalyses the reaction isopentenyl diphosphate + 2 oxidized [2Fe-2S]-[ferredoxin] + H2O = (2E)-4-hydroxy-3-methylbut-2-enyl diphosphate + 2 reduced [2Fe-2S]-[ferredoxin] + 2 H(+). The enzyme catalyses dimethylallyl diphosphate + 2 oxidized [2Fe-2S]-[ferredoxin] + H2O = (2E)-4-hydroxy-3-methylbut-2-enyl diphosphate + 2 reduced [2Fe-2S]-[ferredoxin] + 2 H(+). Its pathway is isoprenoid biosynthesis; dimethylallyl diphosphate biosynthesis; dimethylallyl diphosphate from (2E)-4-hydroxy-3-methylbutenyl diphosphate: step 1/1. The protein operates within isoprenoid biosynthesis; isopentenyl diphosphate biosynthesis via DXP pathway; isopentenyl diphosphate from 1-deoxy-D-xylulose 5-phosphate: step 6/6. Its function is as follows. Catalyzes the conversion of 1-hydroxy-2-methyl-2-(E)-butenyl 4-diphosphate (HMBPP) into a mixture of isopentenyl diphosphate (IPP) and dimethylallyl diphosphate (DMAPP). Acts in the terminal step of the DOXP/MEP pathway for isoprenoid precursor biosynthesis. The protein is 4-hydroxy-3-methylbut-2-enyl diphosphate reductase of Gluconobacter oxydans (strain 621H) (Gluconobacter suboxydans).